Here is a 397-residue protein sequence, read N- to C-terminus: Putative teichuronic acid biosynthesis glycosyltransferase TuaH (397 aa).

The protein belongs to the glycosyltransferase group 1 family.

The protein operates within cell wall biogenesis; teichuronic acid biosynthesis. The polypeptide is Putative teichuronic acid biosynthesis glycosyltransferase TuaH (tuaH) (Bacillus subtilis (strain 168)).